Reading from the N-terminus, the 232-residue chain is Demethylmenaquinone methyltransferase (232 aa).

Residues Thr58, Asp79, and 104–105 contribute to the S-adenosyl-L-methionine site; that span reads NA.

It belongs to the class I-like SAM-binding methyltransferase superfamily. MenG/UbiE family.

The enzyme catalyses a 2-demethylmenaquinol + S-adenosyl-L-methionine = a menaquinol + S-adenosyl-L-homocysteine + H(+). It participates in quinol/quinone metabolism; menaquinone biosynthesis; menaquinol from 1,4-dihydroxy-2-naphthoate: step 2/2. Functionally, methyltransferase required for the conversion of demethylmenaquinol (DMKH2) to menaquinol (MKH2). The polypeptide is Demethylmenaquinone methyltransferase (Bacillus licheniformis (strain ATCC 14580 / DSM 13 / JCM 2505 / CCUG 7422 / NBRC 12200 / NCIMB 9375 / NCTC 10341 / NRRL NRS-1264 / Gibson 46)).